The sequence spans 201 residues: Probable chemoreceptor glutamine deamidase CheD (201 aa).

It belongs to the CheD family.

It catalyses the reaction L-glutaminyl-[protein] + H2O = L-glutamyl-[protein] + NH4(+). In terms of biological role, probably deamidates glutamine residues to glutamate on methyl-accepting chemotaxis receptors (MCPs), playing an important role in chemotaxis. The chain is Probable chemoreceptor glutamine deamidase CheD from Chlorobium luteolum (strain DSM 273 / BCRC 81028 / 2530) (Pelodictyon luteolum).